We begin with the raw amino-acid sequence, 636 residues long: Endoglucanase 4 (636 aa).

The first 25 residues, 1–25 (MTRRWSFLVQCFTFKKKEGVRSRYM), serve as a signal peptide directing secretion. The active-site Nucleophile is Asp-82. Catalysis depends on residues His-400, Asp-438, and Glu-447. In terms of domain architecture, CBM3 spans 478-635 (KVEDEFFVEA…GDLVFGTLPN (158 aa)).

Belongs to the glycosyl hydrolase 9 (cellulase E) family.

The protein resides in the secreted. It carries out the reaction Endohydrolysis of (1-&gt;4)-beta-D-glucosidic linkages in cellulose, lichenin and cereal beta-D-glucans.. The sequence is that of Endoglucanase 4 from Bacillus sp. (strain KSM-522).